A 701-amino-acid chain; its full sequence is Polyribonucleotide nucleotidyltransferase (701 aa).

2 residues coordinate Mg(2+): aspartate 487 and aspartate 493. Residues 554–613 form the KH domain; it reads PTMIAMKIDTDKIRDVIGKGGATIRAICEETKASIDIEDDGSIKIFGESKEAAEAARQRV. Residues 623 to 691 form the S1 motif domain; the sequence is GKIYVGKVER…NRGRIKLSIK (69 aa).

It belongs to the polyribonucleotide nucleotidyltransferase family. Component of the RNA degradosome, which is a multiprotein complex involved in RNA processing and mRNA degradation. Mg(2+) is required as a cofactor.

The protein resides in the cytoplasm. It catalyses the reaction RNA(n+1) + phosphate = RNA(n) + a ribonucleoside 5'-diphosphate. In terms of biological role, involved in mRNA degradation. Catalyzes the phosphorolysis of single-stranded polyribonucleotides processively in the 3'- to 5'-direction. The polypeptide is Polyribonucleotide nucleotidyltransferase (Pseudomonas savastanoi pv. phaseolicola (strain 1448A / Race 6) (Pseudomonas syringae pv. phaseolicola (strain 1448A / Race 6))).